A 215-amino-acid polypeptide reads, in one-letter code: uncharacterized protein (215 aa).

The next 6 membrane-spanning stretches (helical) occupy residues 3-23 (LLAY…LRSI), 30-50 (ANLL…GLTW), 59-79 (LGLS…LRFW), 87-107 (WGTY…AICV), 122-142 (VSTC…SNIY), and 156-176 (VLFG…LIYV).

The protein belongs to the major facilitator superfamily. Allantoate permease family.

It is found in the membrane. This is an uncharacterized protein from Saccharomyces cerevisiae (strain ATCC 204508 / S288c) (Baker's yeast).